The following is a 417-amino-acid chain: Serine hydroxymethyltransferase (417 aa).

Residues Leu121 and Gly125 to Leu127 contribute to the (6S)-5,6,7,8-tetrahydrofolate site. Lys229 is modified (N6-(pyridoxal phosphate)lysine). Ser355–Phe357 contributes to the (6S)-5,6,7,8-tetrahydrofolate binding site.

This sequence belongs to the SHMT family. In terms of assembly, homodimer. Requires pyridoxal 5'-phosphate as cofactor.

The protein localises to the cytoplasm. The catalysed reaction is (6R)-5,10-methylene-5,6,7,8-tetrahydrofolate + glycine + H2O = (6S)-5,6,7,8-tetrahydrofolate + L-serine. It participates in one-carbon metabolism; tetrahydrofolate interconversion. The protein operates within amino-acid biosynthesis; glycine biosynthesis; glycine from L-serine: step 1/1. Catalyzes the reversible interconversion of serine and glycine with tetrahydrofolate (THF) serving as the one-carbon carrier. This reaction serves as the major source of one-carbon groups required for the biosynthesis of purines, thymidylate, methionine, and other important biomolecules. Also exhibits THF-independent aldolase activity toward beta-hydroxyamino acids, producing glycine and aldehydes, via a retro-aldol mechanism. The chain is Serine hydroxymethyltransferase from Aeromonas hydrophila subsp. hydrophila (strain ATCC 7966 / DSM 30187 / BCRC 13018 / CCUG 14551 / JCM 1027 / KCTC 2358 / NCIMB 9240 / NCTC 8049).